Consider the following 749-residue polypeptide: Amyloid-beta A4 precursor protein-binding family A member 2 (749 aa).

Disordered stretches follow at residues 1 to 94 and 130 to 343; these read MAHQ…PEEE and DTDE…NNIP. At S11 the chain carries Phosphoserine. Residues 70-80 show a composition bias toward polar residues; that stretch reads GDSSSDYVNNT. Composition is skewed to acidic residues over residues 81 to 94 and 131 to 142; these read SEEEDYDEGLPEEE and TDECQEAVEEWT. Positions 185–270 are STXBP1-binding; that stretch reads HYCASKEGYQ…SAEACPPIKA (86 aa). Residue S208 is modified to Phosphoserine. Residues 218–227 show a composition bias toward acidic residues; sequence DLEDQEEDID. Over residues 237–247 the composition is skewed to polar residues; the sequence is LSMTSITSASE. The segment covering 305–315 has biased composition (basic and acidic residues); the sequence is RTPEERPKWPH. The PID domain occupies 366–555; sequence LIDGIIFAAN…IINTQEMYND (190 aa). PDZ domains follow at residues 568–653 and 659–735; these read ELQL…NIVS and TVLI…MPAA.

As to quaternary structure, part of a multimeric complex containing STXBP1 and syntaxin-1. Binds to the cytoplasmic domain of amyloid-beta protein, and to the nuclear factor NF-kappa-B/p65 via its PDZ domain. Interacts with the N-terminal domain of NECAB3.

In terms of biological role, putative function in synaptic vesicle exocytosis by binding to STXBP1, an essential component of the synaptic vesicle exocytotic machinery. May modulate processing of the amyloid-beta precursor protein (APP) and hence formation of APP-beta. This Pongo abelii (Sumatran orangutan) protein is Amyloid-beta A4 precursor protein-binding family A member 2 (APBA2).